The primary structure comprises 1079 residues: Alpha-mannosidase C (1079 aa).

An N-terminal signal peptide occupies residues Met-1–Ser-22. His-44 and Asp-46 together coordinate Zn(2+). 2 N-linked (GlcNAc...) asparagine glycosylation sites follow: Asn-60 and Asn-96. Asp-158 is a binding site for Zn(2+). Asp-158 serves as the catalytic Nucleophile. Residues Asn-192, Asn-222, Asn-248, and Asn-467 are each glycosylated (N-linked (GlcNAc...) asparagine). His-475 is a binding site for Zn(2+). Asn-516, Asn-527, Asn-589, Asn-760, Asn-769, Asn-848, Asn-872, Asn-912, Asn-1040, and Asn-1057 each carry an N-linked (GlcNAc...) asparagine glycan.

Belongs to the glycosyl hydrolase 38 family. Zn(2+) serves as cofactor.

It is found in the secreted. It carries out the reaction Hydrolysis of terminal, non-reducing alpha-D-mannose residues in alpha-D-mannosides.. The protein is Alpha-mannosidase C (manC) of Dictyostelium discoideum (Social amoeba).